Here is an 819-residue protein sequence, read N- to C-terminus: Nuclear pore complex protein Nup93 (819 aa).

Thr49 bears the Phosphothreonine mark. Phosphoserine is present on residues Ser52, Ser66, Ser72, Ser75, Ser80, Ser430, and Ser767.

It belongs to the nucleoporin interacting component (NIC) family. As to quaternary structure, part of the nuclear pore complex (NPC). Component of the p62 complex, a complex composed of NUP62 and NUP54. Forms a complex with NUP35, NUP155, NUP205 and lamin B; the interaction with NUP35 is direct. Does not interact with TPR. Interacts with SMAD4 and IPO7; translocates SMAD4 to the nucleus through the NPC upon BMP7 stimulation resulting in activation of SMAD4 signaling. (Microbial infection) Interacts with SARS-CoV translation inhibitor nsp1; this interaction may disrupt nuclear pore function.

It localises to the nucleus membrane. Its subcellular location is the nucleus. It is found in the nuclear pore complex. The protein resides in the nucleus envelope. Its function is as follows. Plays a role in the nuclear pore complex (NPC) assembly and/or maintenance. May anchor nucleoporins, but not NUP153 and TPR, to the NPC. During renal development, regulates podocyte migration and proliferation through SMAD4 signaling. This is Nuclear pore complex protein Nup93 (NUP93) from Homo sapiens (Human).